The chain runs to 503 residues: Cytochrome P450 3A25 (503 aa).

A heme-binding site is contributed by cysteine 442.

This sequence belongs to the cytochrome P450 family. Requires heme as cofactor.

The protein localises to the endoplasmic reticulum membrane. It is found in the microsome membrane. It catalyses the reaction an organic molecule + reduced [NADPH--hemoprotein reductase] + O2 = an alcohol + oxidized [NADPH--hemoprotein reductase] + H2O + H(+). In terms of biological role, cytochromes P450 are a group of heme-thiolate monooxygenases. In liver microsomes, this enzyme is involved in an NADPH-dependent electron transport pathway. It oxidizes a variety of structurally unrelated compounds, including steroids, fatty acids, and xenobiotics. The chain is Cytochrome P450 3A25 (Cyp3a25) from Mus musculus (Mouse).